The following is a 348-amino-acid chain: [LysW]-L-2-aminoadipate 6-phosphate reductase (348 aa).

Position 14 to 17 (14 to 17 (SGYA)) interacts with NADP(+). The active site involves cysteine 151. Residue asparagine 315 coordinates NADP(+).

It belongs to the NAGSA dehydrogenase family. Type 1 subfamily. LysY sub-subfamily.

Its subcellular location is the cytoplasm. It catalyses the reaction [amino-group carrier protein]-C-terminal-N-(1-carboxy-5-oxopentan-1-yl)-L-glutamine + phosphate + NADP(+) = [amino-group carrier protein]-C-terminal-N-(1-carboxy-5-phosphooxy-5-oxopentan-1-yl)-L-glutamine + NADPH + H(+). The protein operates within amino-acid biosynthesis; L-lysine biosynthesis via AAA pathway; L-lysine from L-alpha-aminoadipate (Thermus route): step 3/5. Functionally, catalyzes the NADPH-dependent reduction of [LysW]-aminoadipate 6-phosphate to yield [LysW]-aminoadipate 6-semialdehyde. In Deinococcus radiodurans (strain ATCC 13939 / DSM 20539 / JCM 16871 / CCUG 27074 / LMG 4051 / NBRC 15346 / NCIMB 9279 / VKM B-1422 / R1), this protein is [LysW]-L-2-aminoadipate 6-phosphate reductase.